Reading from the N-terminus, the 747-residue chain is Elastin (747 aa).

Residues methionine 1–proline 26 form the signal peptide. Proline 34, proline 65, and proline 87 each carry 4-hydroxyproline. Allysine occurs at positions 105 and 109. A 4-hydroxyproline mark is found at proline 165, proline 178, and proline 181. Proline 188 is modified (hydroxyproline). The residue at position 201 (proline 201) is a 4-hydroxyproline. An allysine mark is found at lysine 252, lysine 271, and lysine 275. 4-hydroxyproline is present on residues proline 298 and proline 302. An allysine mark is found at lysine 324 and lysine 327. Residues proline 335, proline 365, proline 370, proline 375, proline 380, and proline 385 each carry the 4-hydroxyproline modification. Residues lysine 400, lysine 404, lysine 407, lysine 445, and lysine 448 each carry the allysine modification. 2 positions are modified to 4-hydroxyproline: proline 462 and proline 478. Allysine is present on residues lysine 489 and lysine 493. Proline 513 is modified (4-hydroxyproline). An allysine mark is found at lysine 544, lysine 548, and lysine 552. Residues proline 566, proline 575, proline 584, proline 593, and proline 599 each carry the 4-hydroxyproline modification. Lysine 606 and lysine 609 each carry allysine. Residue proline 630 is modified to 4-hydroxyproline. Lysine 645, lysine 649, lysine 685, and lysine 688 each carry allysine. A 4-hydroxyproline mark is found at proline 719 and proline 733. Cysteine 737 and cysteine 742 are joined by a disulfide.

Belongs to the elastin family. The polymeric elastin chains are cross-linked together into an extensible 3D network. Forms a ternary complex with BGN and MFAP2. Interacts with MFAP2 via divalent cations (calcium &gt; magnesium &gt; manganese) in a dose-dependent and saturating manner. Interacts with FBLN5 and FBN1. Forms a ternary complex with FBN1 and FBLN2 or FBLN5. Interacts with MFAP4 in a Ca (2+)-dependent manner; this interaction promotes ELN self-assembly. Interacts with EFEMP2 with moderate affinity. In terms of processing, elastin is formed through the cross-linking of its soluble precursor tropoelastin. Cross-linking is initiated through the action of lysyl oxidase on exposed lysines to form allysine. Subsequent spontaneous condensation reactions with other allysine or unmodified lysine residues result in various bi-, tri-, and tetrafunctional cross-links. The most abundant cross-links in mature elastin fibers are lysinonorleucine, allysine aldol, desmosine, and isodesmosine. Post-translationally, hydroxylation on proline residues within the sequence motif, GXPG, is most likely to be 4-hydroxy as this fits the requirement for 4-hydroxylation in vertebrates.

Its subcellular location is the secreted. The protein localises to the extracellular space. The protein resides in the extracellular matrix. Functionally, major structural protein of tissues such as aorta and nuchal ligament, which must expand rapidly and recover completely. Molecular determinant of the late arterial morphogenesis, stabilizing arterial structure by regulating proliferation and organization of vascular smooth muscle. This Bos taurus (Bovine) protein is Elastin (ELN).